Consider the following 81-residue polypeptide: Mu/omega-theraphotoxin-Hs1a (81 aa).

Positions Met1 to Ala21 are cleaved as a signal peptide. Positions Ser22 to Arg48 are excised as a propeptide. 3 disulfide bridges follow: Cys50–Cys65, Cys57–Cys70, and Cys64–Cys77.

This sequence belongs to the neurotoxin 10 (Hwtx-1) family. 23 (HwTx-I) subfamily. Expressed by the venom gland.

The protein resides in the secreted. Functionally, lethal toxin with multiple biological activities. Inhibits voltage-gated TTX-sensitive sodium channels in DRG neurons (IC(50)=55 nM) and also shows activity when directly tested on Nav1.7/SCN9A (IC(50)=25.1-630 nM). Inhibits N-type calcium channels (Cav2.2/CACNA1B (IC(50)=100 nM)). Also blocks neuromuscular transmission. In vivo, intrathecal injected toxin shows analgesic activity in the rat formalin-induced pain model, without induction of motor dysfunction in rats. The chain is Mu/omega-theraphotoxin-Hs1a from Cyriopagopus schmidti (Chinese bird spider).